The chain runs to 294 residues: ATP synthase gamma chain (294 aa).

Belongs to the ATPase gamma chain family. In terms of assembly, F-type ATPases have 2 components, CF(1) - the catalytic core - and CF(0) - the membrane proton channel. CF(1) has five subunits: alpha(3), beta(3), gamma(1), delta(1), epsilon(1). CF(0) has three main subunits: a, b and c.

The protein localises to the cell inner membrane. Functionally, produces ATP from ADP in the presence of a proton gradient across the membrane. The gamma chain is believed to be important in regulating ATPase activity and the flow of protons through the CF(0) complex. The sequence is that of ATP synthase gamma chain from Rhizobium johnstonii (strain DSM 114642 / LMG 32736 / 3841) (Rhizobium leguminosarum bv. viciae).